A 429-amino-acid polypeptide reads, in one-letter code: Serum response factor-binding protein 1 (429 aa).

Residue alanine 2 is modified to N-acetylalanine. Coiled-coil stretches lie at residues 42 to 67 (KGTEDALLKNQRRAQRLLEEIHAMKE) and 108 to 144 (LLKKKIDVLKAAVQAFKEARQNVTEVESSKNASEDNH). 2 stretches are compositionally biased toward polar residues: residues 128–138 (QNVTEVESSKN) and 146–160 (KNTLYSNDNGSNLQR). Disordered regions lie at residues 128-285 (QNVT…GDDF) and 311-429 (EKVF…TFDD). The span at 183 to 195 (NSKEKIAKMEHGP) shows a compositional bias: basic and acidic residues. Residue lysine 190 forms a Glycyl lysine isopeptide (Lys-Gly) (interchain with G-Cter in SUMO2) linkage. Phosphoserine occurs at positions 203, 205, 264, 279, and 281. Acidic residues predominate over residues 249-265 (GGEELCEEEKEYFDDST). The segment covering 311–341 (EKVFLKEDTGETHGDTRNDKTKPSTETRKLE) has biased composition (basic and acidic residues). Lysine 316 participates in a covalent cross-link: Glycyl lysine isopeptide (Lys-Gly) (interchain with G-Cter in SUMO2). 3 positions are modified to phosphoserine: serine 349, serine 351, and serine 367. Residues 357–367 (NFKEQAPKTRS) are compositionally biased toward basic and acidic residues. The span at 373 to 383 (NEPQFKNQFNK) shows a compositional bias: polar residues.

In terms of assembly, interacts with SRF. Forms complexes with SRF and SRF cofactors ARID2, MYOCD and NKX2-5. Interacts with the N-terminus of SLC2A4.

The protein localises to the cytoplasm. Its subcellular location is the perinuclear region. Its function is as follows. May be involved in regulating transcriptional activation of cardiac genes during the aging process. May play a role in biosynthesis and/or processing of SLC2A4 in adipose cells. This is Serum response factor-binding protein 1 from Pongo abelii (Sumatran orangutan).